The following is a 78-amino-acid chain: Delta-conotoxin-like S6.8 (78 aa).

The N-terminal stretch at 1–22 (MKLTCMMIVAVLFLTAWTFVTA) is a signal peptide. Residues 23-53 (DDSRNGLKNLFPKARHEMKNPDASKLNKRDG) constitute a propeptide that is removed on maturation. 3 cysteine pairs are disulfide-bonded: C54–C69, C61–C73, and C68–C77.

This sequence belongs to the conotoxin O1 superfamily. As to expression, expressed by the venom duct.

The protein resides in the secreted. Its function is as follows. Delta-conotoxins bind to site 6 of voltage-gated sodium channels (Nav) and inhibit the inactivation process. The polypeptide is Delta-conotoxin-like S6.8 (Conus striatus (Striated cone)).